The chain runs to 77 residues: MARVCEVTGKKPMVGNNVSHANNKTKRRFLPNLQYRRFWVESENRWVRLRVSSAALRLIDKNGIDSVLADMRARGQA.

It belongs to the bacterial ribosomal protein bL28 family.

The sequence is that of Large ribosomal subunit protein bL28 from Acidovorax ebreus (strain TPSY) (Diaphorobacter sp. (strain TPSY)).